Here is a 533-residue protein sequence, read N- to C-terminus: Chromosomal replication initiator protein DnaA (533 aa).

The interval 1–72 (MNDFWQHCSA…DLARDFWNAP (72 aa)) is domain I, interacts with DnaA modulators. Positions 72 to 196 (PIEVQFVLDP…EAADSMYERS (125 aa)) are domain II. The interval 83–120 (AGQRSPAGATPLAPRAPLPSANPAPVAPGPASAPAVDA) is disordered. Residues 96 to 110 (PRAPLPSANPAPVAP) show a composition bias toward pro residues. Positions 111 to 120 (GPASAPAVDA) are enriched in low complexity. Residues 197–413 (KLNPVLTFDN…GALRKILAYS (217 aa)) form a domain III, AAA+ region region. ATP is bound by residues G241, G243, K244, and T245. The segment at 414–533 (KFHGREITIE…LHVLEQTLKG (120 aa)) is domain IV, binds dsDNA.

It belongs to the DnaA family. As to quaternary structure, oligomerizes as a right-handed, spiral filament on DNA at oriC.

It is found in the cytoplasm. Plays an essential role in the initiation and regulation of chromosomal replication. ATP-DnaA binds to the origin of replication (oriC) to initiate formation of the DNA replication initiation complex once per cell cycle. Binds the DnaA box (a 9 base pair repeat at the origin) and separates the double-stranded (ds)DNA. Forms a right-handed helical filament on oriC DNA; dsDNA binds to the exterior of the filament while single-stranded (ss)DNA is stabiized in the filament's interior. The ATP-DnaA-oriC complex binds and stabilizes one strand of the AT-rich DNA unwinding element (DUE), permitting loading of DNA polymerase. After initiation quickly degrades to an ADP-DnaA complex that is not apt for DNA replication. Binds acidic phospholipids. This Burkholderia pseudomallei (strain 1710b) protein is Chromosomal replication initiator protein DnaA.